The primary structure comprises 422 residues: Cystine lyase CORI3 (422 aa).

Belongs to the class-I pyridoxal-phosphate-dependent aminotransferase family. In terms of assembly, homodimer. Pyridoxal 5'-phosphate serves as cofactor. Expressed in cotyledons, sepals, pistils, flower buds, phloem companion cells and vascular tissues of petiole, leaf, filament and fruit.

It catalyses the reaction L-cystine + H2O = S-sulfanyl-L-cysteine + pyruvate + NH4(+). In terms of biological role, possesses cystine lyase activity in vitro. Does not possess tyrosine aminotransferase, alanine aminotransferase, aspartate aminotransferase and tryptophan aminotransferase activities. The polypeptide is Cystine lyase CORI3 (Arabidopsis thaliana (Mouse-ear cress)).